A 517-amino-acid chain; its full sequence is Phenol 2-monooxygenase, oxygenase component DmpN (517 aa).

E109, E139, H142, E200, E234, and H237 together coordinate Fe cation.

It belongs to the TmoA/XamoA family. In terms of assembly, the multicomponent enzyme phenol hydroxylase is formed by DmpL (P1 component), DmpM (P2 component), DmpN (P3 component), DmpO (P4 component) and DmpP (P5 component). The oxygenase component is a dimer composed of three subunits, DmpL, DmpN and DmpO (DmpLNO). DmpN interacts with the auxiliary protein DmpK (P0 component). Fe(2+) serves as cofactor.

It catalyses the reaction phenol + NADH + O2 + H(+) = catechol + NAD(+) + H2O. The protein operates within aromatic compound metabolism; phenol degradation. Requires DmpM for efficient turnover. The activity of DmpLNO oxygenase is inhibited by dithiothreitol (DTT) by a mechanism apparently involving H(2)O(2) generation. Functionally, part of a multicomponent enzyme which catalyzes the degradation of phenol and some of its methylated derivatives. DmpL, DmpN and DmpO form the oxygenase component of the complex. Required for growth on phenol and for in vitro phenol hydroxylase activity. The chain is Phenol 2-monooxygenase, oxygenase component DmpN from Pseudomonas sp. (strain CF600).